The following is a 274-amino-acid chain: 3-methyl-2-oxobutanoate hydroxymethyltransferase (274 aa).

Positions 49 and 88 each coordinate Mg(2+). Residues 49 to 50, Asp88, and Lys118 contribute to the 3-methyl-2-oxobutanoate site; that span reads DS. Residue Glu120 coordinates Mg(2+). Glu187 acts as the Proton acceptor in catalysis.

This sequence belongs to the PanB family. Homodecamer; pentamer of dimers. Mg(2+) is required as a cofactor.

Its subcellular location is the cytoplasm. It carries out the reaction 3-methyl-2-oxobutanoate + (6R)-5,10-methylene-5,6,7,8-tetrahydrofolate + H2O = 2-dehydropantoate + (6S)-5,6,7,8-tetrahydrofolate. Its pathway is cofactor biosynthesis; (R)-pantothenate biosynthesis; (R)-pantoate from 3-methyl-2-oxobutanoate: step 1/2. Its function is as follows. Catalyzes the reversible reaction in which hydroxymethyl group from 5,10-methylenetetrahydrofolate is transferred onto alpha-ketoisovalerate to form ketopantoate. This chain is 3-methyl-2-oxobutanoate hydroxymethyltransferase, found in Paramagnetospirillum magneticum (strain ATCC 700264 / AMB-1) (Magnetospirillum magneticum).